We begin with the raw amino-acid sequence, 357 residues long: Cyclic AMP-responsive element-binding protein 5 (357 aa).

Residues 114 to 239 form a disordered region; it reads RQDQTPHHHL…FLERNRAAAT (126 aa). 2 stretches are compositionally biased toward basic residues: residues 120–129 and 138–175; these read HHHLHSHPHQ and PYPH…HPAH. The span at 186–195 shows a compositional bias: polar residues; sequence TGNQAQVSPA. Over residues 196–206 the composition is skewed to low complexity; the sequence is TQQMQPTQTIQ. A compositionally biased stretch (basic and acidic residues) spans 218–235; it reads VVDEDPDERRRKFLERNR. The region spanning 224 to 287 is the bZIP domain; it reads DERRRKFLER…AQLKQLLLTH (64 aa). Positions 226-246 are basic motif; sequence RRRKFLERNRAAATRCRQKRK. A leucine-zipper region spans residues 252 to 280; the sequence is LEKKAEELTQTNMQLQNEVSMLKNEVAQL. The tract at residues 298 to 318 is disordered; sequence ESQGYLSPESSPPASPVPACS.

The protein belongs to the bZIP family. In terms of assembly, binds DNA as a homodimer or as a heterodimer with JUN or ATF2/CREBP1.

It is found in the nucleus. Functionally, binds to the cAMP response element and activates transcription. The protein is Cyclic AMP-responsive element-binding protein 5 (Creb5) of Mus musculus (Mouse).